The sequence spans 181 residues: Isopentenyl-diphosphate Delta-isomerase (181 aa).

Positions 24 and 30 each coordinate Mn(2+). A Nudix hydrolase domain is found at 28–168 (LLHLAFSVLL…PDTFSVWFPT (141 aa)). Cys-68 is a catalytic residue. Cys-68 is a Mg(2+) binding site. Position 70 (His-70) interacts with Mn(2+). Glu-88 contributes to the Mg(2+) binding site. 2 residues coordinate Mn(2+): Glu-117 and Glu-119. Glu-119 is an active-site residue.

Belongs to the IPP isomerase type 1 family. Requires Mg(2+) as cofactor. It depends on Mn(2+) as a cofactor.

The protein resides in the cytoplasm. It catalyses the reaction isopentenyl diphosphate = dimethylallyl diphosphate. It functions in the pathway isoprenoid biosynthesis; dimethylallyl diphosphate biosynthesis; dimethylallyl diphosphate from isopentenyl diphosphate: step 1/1. Catalyzes the 1,3-allylic rearrangement of the homoallylic substrate isopentenyl (IPP) to its highly electrophilic allylic isomer, dimethylallyl diphosphate (DMAPP). The protein is Isopentenyl-diphosphate Delta-isomerase of Aliivibrio fischeri (strain ATCC 700601 / ES114) (Vibrio fischeri).